A 122-amino-acid chain; its full sequence is UPF0344 protein BPUM_1008 (122 aa).

Helical transmembrane passes span 5-25 (LHIT…ALAG), 33-53 (IVHM…VELY), 60-80 (IPGF…VIGF), and 93-113 (SVTG…LLGL).

It belongs to the UPF0344 family.

It is found in the cell membrane. The protein is UPF0344 protein BPUM_1008 of Bacillus pumilus (strain SAFR-032).